The primary structure comprises 459 residues: UDP-N-acetylmuramoylalanine--D-glutamate ligase (459 aa).

An ATP-binding site is contributed by 119 to 125 (GTNGKTT).

This sequence belongs to the MurCDEF family.

The protein resides in the cytoplasm. It catalyses the reaction UDP-N-acetyl-alpha-D-muramoyl-L-alanine + D-glutamate + ATP = UDP-N-acetyl-alpha-D-muramoyl-L-alanyl-D-glutamate + ADP + phosphate + H(+). It participates in cell wall biogenesis; peptidoglycan biosynthesis. Cell wall formation. Catalyzes the addition of glutamate to the nucleotide precursor UDP-N-acetylmuramoyl-L-alanine (UMA). The sequence is that of UDP-N-acetylmuramoylalanine--D-glutamate ligase from Lactiplantibacillus plantarum (strain ATCC BAA-793 / NCIMB 8826 / WCFS1) (Lactobacillus plantarum).